Here is a 181-residue protein sequence, read N- to C-terminus: Insulin-like growth factor 2 (181 aa).

The signal sequence occupies residues 1 to 24 (MGIPVGKSLLMLFTFLAFASCCIA). The b stretch occupies residues 25–52 (AYRPSETLCGGELVDTLQFVCGDRGFYF). Disulfide bonds link Cys33–Cys71, Cys45–Cys84, and Cys70–Cys75. The segment at 53-64 (SRPASRINRRSR) is c. The segment at 65-85 (GIVEECCFRSCDLALLETYCA) is a. Residues 86–91 (TPAKSE) are d. A propeptide spans 92 to 181 (RDVSTPPTVL…AFVEVSSDLQ (90 aa)) (e peptide). Thr163 carries O-linked (GalNAc...) threonine glycosylation.

Belongs to the insulin family. As to quaternary structure, interacts with MYORG; this interaction is required for IGF2 secretion. Interacts with integrins ITGAV:ITGB3 and ITGA6:ITGB4; integrin-binding is required for IGF2 signaling. Interacts with IGFBP2. Post-translationally, proteolytically processed by PCSK4, proIGF2 is cleaved at Arg-128 and Arg-92 to generate big-IGF2 and mature IGF2.

The protein localises to the secreted. Its function is as follows. The insulin-like growth factors possess growth-promoting activity. Major fetal growth hormone in mammals. Plays a key role in regulating fetoplacental development. IGF2 is influenced by placental lactogen. Also involved in tissue differentiation. In adults, involved in glucose metabolism in adipose tissue, skeletal muscle and liver. Acts as a ligand for integrin which is required for IGF2 signaling. Positively regulates myogenic transcription factor MYOD1 function by facilitating the recruitment of transcriptional coactivators, thereby controlling muscle terminal differentiation. Inhibits myoblast differentiation and modulates metabolism via increasing the mitochondrial respiration rate. In terms of biological role, preptin undergoes glucose-mediated co-secretion with insulin, and acts as a physiological amplifier of glucose-mediated insulin secretion. Exhibits osteogenic properties by increasing osteoblast mitogenic activity through phosphoactivation of MAPK1 and MAPK3. This is Insulin-like growth factor 2 from Equus caballus (Horse).